Consider the following 541-residue polypeptide: Protein MGF 505-10R (541 aa).

It belongs to the asfivirus MGF 505 family.

Functionally, plays a role in virus cell tropism, and may be required for efficient virus replication in macrophages. The protein is Protein MGF 505-10R of Ornithodoros (relapsing fever ticks).